A 260-amino-acid polypeptide reads, in one-letter code: Na(+)-translocating NADH-quinone reductase subunit C (260 aa).

Residues 12 to 32 form a helical membrane-spanning segment; the sequence is LLVIILLSLACSIIVAGSAVL. FMN phosphoryl threonine is present on Thr-226.

Belongs to the NqrC family. As to quaternary structure, composed of six subunits; NqrA, NqrB, NqrC, NqrD, NqrE and NqrF. Requires FMN as cofactor.

It localises to the cell inner membrane. The catalysed reaction is a ubiquinone + n Na(+)(in) + NADH + H(+) = a ubiquinol + n Na(+)(out) + NAD(+). In terms of biological role, NQR complex catalyzes the reduction of ubiquinone-1 to ubiquinol by two successive reactions, coupled with the transport of Na(+) ions from the cytoplasm to the periplasm. NqrA to NqrE are probably involved in the second step, the conversion of ubisemiquinone to ubiquinol. The protein is Na(+)-translocating NADH-quinone reductase subunit C of Pasteurella multocida (strain Pm70).